Reading from the N-terminus, the 396-residue chain is Actin-related protein 6 (396 aa).

An N-acetylthreonine modification is found at Thr-2. Lys-260 carries the post-translational modification N6-acetyllysine.

This sequence belongs to the actin family. ARP6 subfamily. As to quaternary structure, component of the chromatin-remodeling SRCAP complex composed of at least SRCAP, DMAP1, RUVBL1, RUVBL2, ACTL6A, YEATS4, ACTR6 and ZNHIT1. Interacts with CBX1, CBX3 and CBX5.

It localises to the cytoplasm. Its subcellular location is the cytoskeleton. The protein resides in the nucleus. The protein localises to the nucleolus. Required for formation and/or maintenance of proper nucleolar structure and function. Plays a dual role in the regulation of ribosomal DNA (rDNA) transcription. In the presence of high glucose, maintains active rDNA transcription through H2A.Z deposition and under glucose starvation, is required for the repression of rDNA transcription, and this function may be independent of H2A.Z. The sequence is that of Actin-related protein 6 (Actr6) from Mus musculus (Mouse).